The primary structure comprises 2179 residues: MNSLSWGAANAVLLLLLLAWASPTFISINRGVRVMKGHSAFLSGDDLKFAIPKEKDACKVEVVMNEPITQRVGKLTPQVFDCHFLPNEVKYVHNGCPILDEDTVKLRLYRFTERDTFIETFILWVYLLEPDCNIIHMSNNVLEVPEFNGLSQAIDKNLLRFDYDRMASLECTVSLDTARTRLPAHGQMVLGEPRPEEPRGDQPHSFFPESQLRAKLKCPGGSCTPGLKKIGSLKVSCEEFLLMGLRYQHLDPPSPNIDYISIQLDLTDTRSKIVYKSESAWLPVYIRAGIPNQIPKAAFMAVFILEVDQFILTSLTTSVLDCEEDETPKPLLVFNITKAPLQGYVTHLLDHTRPISSFTWKDLSDMQIAYQPPNSSHSERRHDEVELEVYDFFFERSAPMTVHISIRTADTNAPRVSWNTGLSLLEGQSRAITWEQFQVVDNDDIGAVRLVTVGGLQHGWLTLRGGKGFLFTVADLQAGVVRYHHDDSDSTKDFVVFRIFDGHHSIRHKFPINVLPKDDSPPFLITNVVIELEEGQTILIQGSMLRASDVDASDDYIFFNITKPPQAGEIMKKPGPGLIGYPVHGFLQRDLFNGIIYYRHFGGEIFEDSFQFVLWDSHEPPNLSVPQVATIHITPVDDQLPKEAPGVSRHLVVKETEVAYITKKQLHFIDSESYDRELVYTITTPPFFSFSHRHLDAGKLFMVDSIPKVVKNPTALELRSFTQHAVNYMKVAYMPPMQDIGPHCRDVQFTFSVSNQHGGTLHGICFNITILPVDNQVPEAFTNPLKVTEGGQSIISTEHILISDADTKLDNIDLSLRELPLHGRVELNGFPLNSGGTFSWGDLHTLKVRYQHDGTEVLQDDLLLEVTDGTNSAEFVLHVEVFPVNDEPPVLKADLMPVMNCSEGGEVVITSEYIFATDVDSDNLKLMFVIAREPQHGVVRRAGVTVDQFSQRDVISEAVTYKHTGGEIGLMPCFDTITLVVSDGEAGPFVNGCCYNGPNPSVPLHASFPVYDLNITVYPVDNQPPSIAIGPVFVVDEGCSTALTVNHLSATDPDTAADDLEFVLVSPPQFGYLENILPSVGFEKSNIGISIDSFQWKDMNAFHINYVQSRHLRIEPTADQFTVYVTDGKHHSLEIPFSIIINPTNDEAPDFVVQNITVCEGQMKELDSSIISAVDLDIPQDALLFSITQKPRHGLLIDRGFSKDFSENKQPANPHQKHAPVHSFSMELLKTGMRLTYMHDDSESLADDFTIQLSDGKHKILKTISVEVIPVNDEKPMLSKKAEIAMNMGETRIISSAILSAIDEDSPREKIYYVFERLPQNGQLQLKIGRDWVPLSPGMKCTQEEVDLNLLRYTHTGAMDSQNQDSFTFYLWDGNNRSPALDCQITIKDMEKGDIVILTKPLVVSKGDRGFLTTTTLLAVDGTDKPEELLYVITSPPRYGQIEYVHYPGVPITNFSQMDVVGQTVCYVHKSKVTVSSDRFRFIISNGLRTEHGVFEITLETVDRALPVVTRNKGLRLAQGAVGLLSPDLLQLTDPDTPAENLTFLLVQLPQHGQLYLWGTGLLQHNFTQQDVDSKNVAYRHSGGDSQTDCFTFMATDGTNQGFIVNGRVWEEPVLFTIQVDQLDKTAPRITLLHSPSQVGLLKNGCYGIYITSRVLKASDPDTEDDQIIFKILQGPKHGHLENTTTGEFIHEKFSQKDLNSKTILYIINPSLEVNSDTVEFQIMDPTGNSATPQILELKWSHIEWSQTEYEVCENVGLLPLEIIRRGYSMDSAFVGIKVNQVSAAVGKDFTVIPSKLIQFDPGMSTKMWNIAITYDGLEEDDEVFEVILNSPVNAVLGTKTKAAVKILDSKGGQCHPSYSSNQSKHSTWEKGIWHLLPPGSSSSTTSGSFHLERRPLPSSMQLAVIRGDTLRGFDSTDLSQRKLRTRGNGKTVRPSSVYRNGTDIIYNYHGIVSLKLEDDSFPTHKRKAKVSIISQPQKTIKVAELPQADKVESTTDSHFPRQDQLPSFPKNCTLELKGLFHFEEGIQKLYQCNGIAWKAWSPQTKDVEDKSCPAGWHQHSGYCHILITEQKGTWNAAAQACREQYLGNLVTVFSRQHMRWLWDIGGRKSFWIGLNDQVHAGHWEWIGGEPVAFTNGRRGPSQRSKLGKSCVLVQRQGKWQTKDCRRAKPHNYVCSRKL.

A signal peptide spans 1-21; the sequence is MNSLSWGAANAVLLLLLLAWA. Positions 199–201 match the Cell attachment site motif; it reads RGD. CSPG repeat units follow at residues 296–390, 413–500, and 521–615; these read KAAF…LEVY, APRV…FRIF, and PPFL…FVLW. N-linked (GlcNAc...) asparagine glycosylation is present at Asn-335. 2 N-linked (GlcNAc...) asparagine glycosylation sites follow: Asn-560 and Asn-622. 3 CSPG repeats span residues 642 to 754, 776 to 867, and 887 to 982; these read KEAP…FSVS, QVPE…LEVT, and EPPV…LVVS. Asn-1014 is a glycosylation site (N-linked (GlcNAc...) asparagine). CSPG repeat units lie at residues 1024–1126, 1147–1254, 1275–1372, 1393–1485, 1506–1596, and 1628–1724; these read PPSI…VYVT, EAPD…IQLS, KPML…FYLW, GDIV…FIIS, LPVV…FMAT, and PRIT…FQIM. N-linked (GlcNAc...) asparagine glycosylation is present at Asn-1566. The Calx-beta domain maps to 1731–1830; the sequence is ATPQILELKW…DDEVFEVILN (100 aa). The Cell attachment site signature appears at 1907-1909; that stretch reads RGD. Residues 2060–2174 form the C-type lectin domain; sequence HSGYCHILIT…CRRAKPHNYV (115 aa). A disulfide bridge connects residues Cys-2151 and Cys-2165.

The protein belongs to the FRAS1 family. In terms of assembly, interacts with FREM2.

It is found in the secreted. It localises to the extracellular space. Its subcellular location is the extracellular matrix. The protein resides in the basement membrane. In terms of biological role, extracellular matrix protein that plays a role in epidermal differentiation and is required for epidermal adhesion during embryonic development. This Homo sapiens (Human) protein is FRAS1-related extracellular matrix protein 1.